A 215-amino-acid polypeptide reads, in one-letter code: LysM and putative peptidoglycan-binding domain-containing protein 2 (215 aa).

Positions 1–40 (MADLSPAPALREGGPRAHRPSAPSPPPRSRSTSEPEEAEL) are disordered. At Ala-2 the chain carries N-acetylalanine. Ser-5, Ser-24, Ser-33, and Ser-57 each carry phosphoserine. Residues 71–115 (VEHRVRAGDTLQGIALKYGVTMEQIKRANKLFTNDCIFLKKTLSI) enclose the LysM domain. Disordered stretches follow at residues 135-176 (ESET…EVSA) and 195-215 (RKLK…LYHS). Acidic residues predominate over residues 145-156 (QEEEPVVSEEEL). Residues 157-169 (PPPSPQDPDPKPA) are compositionally biased toward pro residues. The segment covering 196 to 205 (KLKEESRDEE) has biased composition (basic and acidic residues).

The polypeptide is LysM and putative peptidoglycan-binding domain-containing protein 2 (Lysmd2) (Mus musculus (Mouse)).